The chain runs to 150 residues: Large ribosomal subunit protein eL19 (150 aa).

Positions Ser-59–Met-89 are disordered. A compositionally biased stretch (basic residues) spans Tyr-61 to Met-89.

This sequence belongs to the eukaryotic ribosomal protein eL19 family. As to quaternary structure, part of the 50S ribosomal subunit.

Its function is as follows. Binds to the 23S rRNA. This Pyrococcus horikoshii (strain ATCC 700860 / DSM 12428 / JCM 9974 / NBRC 100139 / OT-3) protein is Large ribosomal subunit protein eL19.